The following is an 897-amino-acid chain: Leucine--tRNA ligase (897 aa).

The 'HIGH' region signature appears at proline 42 to histidine 52. The short motif at threonine 645–serine 649 is the 'KMSKS' region element. Residue lysine 648 participates in ATP binding.

The protein belongs to the class-I aminoacyl-tRNA synthetase family.

Its subcellular location is the cytoplasm. It carries out the reaction tRNA(Leu) + L-leucine + ATP = L-leucyl-tRNA(Leu) + AMP + diphosphate. In Paracidovorax citrulli (strain AAC00-1) (Acidovorax citrulli), this protein is Leucine--tRNA ligase.